A 226-amino-acid chain; its full sequence is MAAPVTRQVSGCAGRVPSPAGSVTERGQPLAAAVAELPVLDASGRRVTFGALFRERRAVVVFVRHFLCYVCKEYVEDLAKIPKSVLREADVTLIVIGQSSYHHIEPFCKLTGYSHEIYVDPEREIYKRLGMKRGEEISSSGQSPHIKSNLLSGSLQSLWRAVTGPLFDFQGDPAQQGGTLILGPGNNIHFVHRDRNRLDHKPINSVLQLVGVQPVNFMSRPTVIHV.

The interval 1–24 (MAAPVTRQVSGCAGRVPSPAGSVT) is disordered.

The protein belongs to the peroxiredoxin-like PRXL2 family. PRXL2C subfamily.

May positively regulate ERK1/2 signaling and AKT1 activation leading to HIF1A up-regulation with an increased expression of glycolysis genes and enhanced glycolysis. This chain is Peroxiredoxin-like 2C (Prxl2c), found in Mus musculus (Mouse).